The primary structure comprises 136 residues: MARTKQTARKSTGGKAPRKQIAAKAARKAAPSTGGVKKPHRYKPGTVALREIRRYQKSTELLIRKLPFQRLVREIAQDFKSDLRFQSSAIGALQESVEAYLVSLFEDTNLCAIHAKRVTIQSKDIQLARRLRGERS.

The tract at residues 1-42 (MARTKQTARKSTGGKAPRKQIAAKAARKAAPSTGGVKKPHRY) is disordered. Position 5 is an N6,N6,N6-trimethyllysine; alternate (Lys-5). At Lys-5 the chain carries N6,N6-dimethyllysine; alternate. N6-methyllysine; alternate occurs at positions 5 and 10. At Lys-10 the chain carries N6-acetyllysine; alternate. A Phosphoserine modification is found at Ser-11. N6,N6-dimethyllysine; alternate is present on Lys-15. N6-acetyllysine; alternate occurs at positions 15, 19, 24, 28, and 37. 4 positions are modified to N6-methyllysine; alternate: Lys-19, Lys-24, Lys-28, and Lys-37. Positions 19-31 (KQIAAKAARKAAP) are enriched in low complexity. Lys-28 and Lys-37 each carry N6,N6,N6-trimethyllysine; alternate. N6,N6-dimethyllysine; alternate is present on residues Lys-28 and Lys-37. Residues Lys-57 and Lys-65 each carry the N6-acetyllysine modification. Position 80 is an N6,N6,N6-trimethyllysine; alternate (Lys-80). An N6,N6-dimethyllysine; alternate modification is found at Lys-80. N6-methyllysine; alternate is present on Lys-80.

This sequence belongs to the histone H3 family. As to quaternary structure, the nucleosome is a histone octamer containing two molecules each of H2A, H2B, H3 and H4 assembled in one H3-H4 heterotetramer and two H2A-H2B heterodimers. The octamer wraps approximately 147 bp of DNA. In terms of processing, phosphorylated to form H3S10ph. H3S10ph promotes subsequent H3K14ac formation and is required for transcriptional activation through TBP recruitment to the promoters. Post-translationally, mono-, di- and trimethylated by the COMPASS complex to form H3K4me1/2/3. H3K4me activates gene expression by regulating transcription elongation and plays a role in telomere length maintenance. H3K4me enrichment correlates with transcription levels, and occurs in a 5' to 3' gradient with H3K4me3 enrichment at the 5'-end of genes, shifting to H3K4me2 and then H3K4me1. Methylated by SET2 to form H3K36me. H3K36me represses gene expression. Methylated by DOT1 to form H3K79me. H3K79me is required for association of SIR proteins with telomeric regions and for telomeric silencing. The COMPASS-mediated formation of H3K4me2/3 and the DOT1-mediated formation of H3K79me require H2BK123ub1. Acetylation of histone H3 leads to transcriptional activation. H3K14ac formation by GCN5 is promoted by H3S10ph. H3K14ac can also be formed by ESA1. H3K56ac formation occurs predominantly in newly synthesized H3 molecules during G1, S and G2/M of the cell cycle and may be involved in DNA repair.

It localises to the nucleus. Its subcellular location is the chromosome. Functionally, core component of nucleosome. Nucleosomes wrap and compact DNA into chromatin, limiting DNA accessibility to the cellular machineries which require DNA as a template. Histones thereby play a central role in transcription regulation, DNA repair, DNA replication and chromosomal stability. DNA accessibility is regulated via a complex set of post-translational modifications of histones, also called histone code, and nucleosome remodeling. This Coccidioides immitis (strain RS) (Valley fever fungus) protein is Histone H3 (HHT1).